The chain runs to 172 residues: Adenine phosphoribosyltransferase (172 aa).

This sequence belongs to the purine/pyrimidine phosphoribosyltransferase family. As to quaternary structure, homodimer.

Its subcellular location is the cytoplasm. The catalysed reaction is AMP + diphosphate = 5-phospho-alpha-D-ribose 1-diphosphate + adenine. It participates in purine metabolism; AMP biosynthesis via salvage pathway; AMP from adenine: step 1/1. Catalyzes a salvage reaction resulting in the formation of AMP, that is energically less costly than de novo synthesis. This chain is Adenine phosphoribosyltransferase, found in Clostridium botulinum (strain Eklund 17B / Type B).